The following is a 301-amino-acid chain: Phosducin-like protein (301 aa).

An N-acetylthreonine modification is found at threonine 2. The tract at residues 15–60 is disordered; that stretch reads YYYSTSEDEDSDHEDKDRGRGAPASSSTPAEAELAGEGISVNTGPK. A phosphoserine mark is found at serine 20 and serine 25. Over residues 36–49 the composition is skewed to low complexity; sequence APASSSTPAEAELA. The region spanning 36-299 is the Phosducin domain; sequence APASSSTPAE…TCHSEDSDLE (264 aa). Positions 158-301 are thioredoxin fold; that stretch reads FKQVLEIPSG…HSEDSDLEID (144 aa). Phosphoserine occurs at positions 226, 293, and 296.

Belongs to the phosducin family. Interacts with the CCT chaperonin complex. Forms a complex with the beta and gamma subunits of the GTP-binding protein, transducin.

The protein localises to the cell projection. The protein resides in the cilium. Functionally, functions as a co-chaperone for CCT in the assembly of heterotrimeric G protein complexes, facilitates the assembly of both Gbeta-Ggamma and RGS-Gbeta5 heterodimers. Also acts as a positive regulator of hedgehog signaling and regulates ciliary function. The protein is Phosducin-like protein (Pdcl) of Rattus norvegicus (Rat).